The sequence spans 248 residues: Proteasome subunit alpha type-7 (248 aa).

S130 carries an O-linked (GlcNAc) serine glycan. A Phosphotyrosine modification is found at Y153. Residue K227 is modified to N6-acetyllysine.

This sequence belongs to the peptidase T1A family. As to quaternary structure, the 26S proteasome consists of a 20S proteasome core and two 19S regulatory subunits. The 20S proteasome core is a barrel-shaped complex made of 28 subunits that are arranged in four stacked rings. The two outer rings are each formed by seven alpha subunits, and the two inner rings are formed by seven beta subunits. The proteolytic activity is exerted by three beta-subunits PSMB5, PSMB6 and PSMB7. PSMA7 interacts directly with the PSMG1-PSMG2 heterodimer which promotes 20S proteasome assembly. Interacts with HIF1A. Interacts with RAB7A. Interacts with PRKN. Interacts with ABL1 and ABL2. Interacts with EMAP2. Interacts with MAVS.

The protein localises to the cytoplasm. Its subcellular location is the nucleus. Component of the 20S core proteasome complex involved in the proteolytic degradation of most intracellular proteins. This complex plays numerous essential roles within the cell by associating with different regulatory particles. Associated with two 19S regulatory particles, forms the 26S proteasome and thus participates in the ATP-dependent degradation of ubiquitinated proteins. The 26S proteasome plays a key role in the maintenance of protein homeostasis by removing misfolded or damaged proteins that could impair cellular functions, and by removing proteins whose functions are no longer required. Associated with the PA200 or PA28, the 20S proteasome mediates ubiquitin-independent protein degradation. This type of proteolysis is required in several pathways including spermatogenesis (20S-PA200 complex) or generation of a subset of MHC class I-presented antigenic peptides (20S-PA28 complex). Inhibits the transactivation function of HIF-1A under both normoxic and hypoxia-mimicking conditions. The interaction with EMAP2 increases the proteasome-mediated HIF-1A degradation under the hypoxic conditions. Plays a role in hepatitis C virus internal ribosome entry site-mediated translation. Mediates nuclear translocation of the androgen receptor (AR) and thereby enhances androgen-mediated transactivation. Promotes MAVS degradation and thereby negatively regulates MAVS-mediated innate immune response. This Bos taurus (Bovine) protein is Proteasome subunit alpha type-7 (PSMA7).